A 194-amino-acid chain; its full sequence is Probable thymidylate kinase (194 aa).

9–16 (GIDGVGKS) contacts ATP.

The protein belongs to the thymidylate kinase family.

The catalysed reaction is dTMP + ATP = dTDP + ADP. This chain is Probable thymidylate kinase, found in Methanopyrus kandleri (strain AV19 / DSM 6324 / JCM 9639 / NBRC 100938).